A 988-amino-acid polypeptide reads, in one-letter code: Bifunctional glutamine synthetase adenylyltransferase/adenylyl-removing enzyme (988 aa).

Residues 1–472 (MTKRETVERR…RYSALFEQET (472 aa)) are adenylyl removase. An adenylyl transferase region spans residues 476-988 (GEAGNLVFTG…AFVAVVKNGG (513 aa)).

The protein belongs to the GlnE family. Requires Mg(2+) as cofactor.

It catalyses the reaction [glutamine synthetase]-O(4)-(5'-adenylyl)-L-tyrosine + phosphate = [glutamine synthetase]-L-tyrosine + ADP. It carries out the reaction [glutamine synthetase]-L-tyrosine + ATP = [glutamine synthetase]-O(4)-(5'-adenylyl)-L-tyrosine + diphosphate. Functionally, involved in the regulation of glutamine synthetase GlnA, a key enzyme in the process to assimilate ammonia. When cellular nitrogen levels are high, the C-terminal adenylyl transferase (AT) inactivates GlnA by covalent transfer of an adenylyl group from ATP to specific tyrosine residue of GlnA, thus reducing its activity. Conversely, when nitrogen levels are low, the N-terminal adenylyl removase (AR) activates GlnA by removing the adenylyl group by phosphorolysis, increasing its activity. The regulatory region of GlnE binds the signal transduction protein PII (GlnB) which indicates the nitrogen status of the cell. The protein is Bifunctional glutamine synthetase adenylyltransferase/adenylyl-removing enzyme of Agrobacterium fabrum (strain C58 / ATCC 33970) (Agrobacterium tumefaciens (strain C58)).